The primary structure comprises 586 residues: Acyl-coenzyme A synthetase ACSM3, mitochondrial (586 aa).

The N-terminal 27 residues, 1–27, are a transit peptide targeting the mitochondrion; that stretch reads MLACVTMKMLRHAKCFQRLAIFGSVRA. Lys-73 and Lys-106 each carry N6-succinyllysine. Lys-157 is modified (N6-acetyllysine). Residues 235-243, 374-379, Asp-461, Arg-476, and Lys-572 each bind ATP; these read TSGTSGYPK and EGYGQT.

The protein belongs to the ATP-dependent AMP-binding enzyme family. It depends on Mg(2+) as a cofactor. Mn(2+) is required as a cofactor.

The protein resides in the mitochondrion. It is found in the mitochondrion matrix. It catalyses the reaction a medium-chain fatty acid + ATP + CoA = a medium-chain fatty acyl-CoA + AMP + diphosphate. The enzyme catalyses propanoate + ATP + CoA = propanoyl-CoA + AMP + diphosphate. It carries out the reaction butanoate + ATP + CoA = butanoyl-CoA + AMP + diphosphate. The catalysed reaction is 2-methylpropanoate + ATP + CoA = 2-methylpropanoyl-CoA + AMP + diphosphate. It catalyses the reaction 2-methylbutanoate + ATP + CoA = 2-methylbutanoyl-CoA + AMP + diphosphate. The enzyme catalyses octanoate + ATP + CoA = octanoyl-CoA + AMP + diphosphate. Catalyzes the activation of fatty acids by CoA to produce an acyl-CoA, the first step in fatty acid metabolism. Capable of activating medium-chain fatty acids with a preference for isobutyrate among fatty acids with 2-6 carbon atoms. This Pongo abelii (Sumatran orangutan) protein is Acyl-coenzyme A synthetase ACSM3, mitochondrial (ACSM3).